Consider the following 231-residue polypeptide: MKRLWSAFIKLLVLAVIGGALLAAIAILAANRQLPSLDALTAFRHTPDYVPIGKIPRELTGAVVAIEDERFYVHDGIDYIGVVRAGVANLSDELSQGASTITMQVARNFYLSRDKTYTRKLYEVLLSYRIEKALTKDEILELYMNKIYLGQGAYGFADAARTYFGKRLDQLTLAECAMLAGLPKAPSANNPVANPRRARQRQVYILQRMLELGRISRGEYDGALLEPLRLR.

A helical transmembrane segment spans residues 8–28 (FIKLLVLAVIGGALLAAIAIL).

The protein belongs to the glycosyltransferase 51 family.

The protein resides in the secreted. It localises to the membrane. It participates in cell wall biogenesis; peptidoglycan biosynthesis. Its function is as follows. Cell wall formation. In Cupriavidus necator (strain ATCC 17699 / DSM 428 / KCTC 22496 / NCIMB 10442 / H16 / Stanier 337) (Ralstonia eutropha), this protein is Putative transglycosylase H16_A0665.